Consider the following 259-residue polypeptide: Small ribosomal subunit protein eS1 (259 aa).

Disordered regions lie at residues 1 to 23 and 235 to 259; these read MAVG…KTAD and ESKS…VDSV. A compositionally biased stretch (basic residues) spans 8–19; that stretch reads KVTKGGKKGGKK. Residues 246 to 259 show a composition bias toward basic and acidic residues; the sequence is SRPDHYEPPKVDSV.

Belongs to the eukaryotic ribosomal protein eS1 family. As to quaternary structure, component of the small ribosomal subunit. Mature ribosomes consist of a small (40S) and a large (60S) subunit. The 40S subunit contains about 33 different proteins and 1 molecule of RNA (18S). The 60S subunit contains about 49 different proteins and 3 molecules of RNA (28S, 5.8S and 5S).

It localises to the cytoplasm. This is Small ribosomal subunit protein eS1 from Schistosoma japonicum (Blood fluke).